A 291-amino-acid polypeptide reads, in one-letter code: Shikimate dehydrogenase (NADP(+)) (291 aa).

Shikimate is bound by residues 26-28 and S73; that span reads SLS. K77 (proton acceptor) is an active-site residue. Residues N98 and D113 each coordinate shikimate. Residues 137-141 and V238 contribute to the NADP(+) site; that span reads GAGGA. Y240 is a shikimate binding site. NADP(+) is bound at residue G261.

The protein belongs to the shikimate dehydrogenase family. Homodimer.

It catalyses the reaction shikimate + NADP(+) = 3-dehydroshikimate + NADPH + H(+). The protein operates within metabolic intermediate biosynthesis; chorismate biosynthesis; chorismate from D-erythrose 4-phosphate and phosphoenolpyruvate: step 4/7. Functionally, involved in the biosynthesis of the chorismate, which leads to the biosynthesis of aromatic amino acids. Catalyzes the reversible NADPH linked reduction of 3-dehydroshikimate (DHSA) to yield shikimate (SA). This Listeria innocua serovar 6a (strain ATCC BAA-680 / CLIP 11262) protein is Shikimate dehydrogenase (NADP(+)).